We begin with the raw amino-acid sequence, 385 residues long: FAD-dependent monooxygenase verC2 (385 aa).

FAD-binding residues include arginine 27, aspartate 227, and alanine 240. A glycan (N-linked (GlcNAc...) asparagine) is linked at asparagine 320. The chain crosses the membrane as a helical span at residues 365–385 (WKTTIMFIALLTIVVLIYSFI).

It belongs to the paxM FAD-dependent monooxygenase family. FAD serves as cofactor.

It localises to the membrane. It participates in secondary metabolite biosynthesis; terpenoid biosynthesis. Its pathway is mycotoxin biosynthesis. In terms of biological role, FAD-dependent monooxygenase; part of the gene cluster that mediates the biosynthesis of the neurotoxin verrucosidin, a methylated alpha-pyrone polyketide that inhibits oxidative phosphorylation in mitochondria and thereby causes neurological diseases. The carbon backbone of verrucosidin is synthesized by the HR-PKS verA, and further modified by the other verrucodidin cluster enzymes. The polypeptide is FAD-dependent monooxygenase verC2 (Penicillium polonicum).